Reading from the N-terminus, the 232-residue chain is Histone H1.X (232 aa).

The H15 domain occupies 36–112; sequence HHPSYMDMIK…GATGSFRMGK (77 aa). The segment at 142–232 is disordered; sequence ISKAEKTKPS…LRTGTRKSYC (91 aa). Basic residues predominate over residues 159 to 197; it reads KKGKPISTMKKRGVMSKKRSSKNKMAPKAKSHGLKKKGP.

It belongs to the histone H1/H5 family.

It is found in the nucleus. It localises to the chromosome. This Caenorhabditis elegans protein is Histone H1.X (hil-1).